Reading from the N-terminus, the 635-residue chain is Threonine--tRNA ligase (635 aa).

The region spanning Met1–Thr61 is the TGS domain. The catalytic stretch occupies residues Asp242–Pro533. 3 residues coordinate Zn(2+): Cys333, His384, and His510.

It belongs to the class-II aminoacyl-tRNA synthetase family. As to quaternary structure, homodimer. Zn(2+) serves as cofactor.

It localises to the cytoplasm. The catalysed reaction is tRNA(Thr) + L-threonine + ATP = L-threonyl-tRNA(Thr) + AMP + diphosphate + H(+). In terms of biological role, catalyzes the attachment of threonine to tRNA(Thr) in a two-step reaction: L-threonine is first activated by ATP to form Thr-AMP and then transferred to the acceptor end of tRNA(Thr). Also edits incorrectly charged L-seryl-tRNA(Thr). The protein is Threonine--tRNA ligase of Rickettsia typhi (strain ATCC VR-144 / Wilmington).